Here is a 113-residue protein sequence, read N- to C-terminus: Large ribosomal subunit protein uL22 (113 aa).

This sequence belongs to the universal ribosomal protein uL22 family. Part of the 50S ribosomal subunit.

In terms of biological role, this protein binds specifically to 23S rRNA; its binding is stimulated by other ribosomal proteins, e.g. L4, L17, and L20. It is important during the early stages of 50S assembly. It makes multiple contacts with different domains of the 23S rRNA in the assembled 50S subunit and ribosome. Its function is as follows. The globular domain of the protein is located near the polypeptide exit tunnel on the outside of the subunit, while an extended beta-hairpin is found that lines the wall of the exit tunnel in the center of the 70S ribosome. The protein is Large ribosomal subunit protein uL22 of Oceanobacillus iheyensis (strain DSM 14371 / CIP 107618 / JCM 11309 / KCTC 3954 / HTE831).